The following is a 504-amino-acid chain: ATP synthase subunit alpha (504 aa).

ATP is bound at residue 170-177 (GDRQTGKT).

Belongs to the ATPase alpha/beta chains family. In terms of assembly, F-type ATPases have 2 components, CF(1) - the catalytic core - and CF(0) - the membrane proton channel. CF(1) has five subunits: alpha(3), beta(3), gamma(1), delta(1), epsilon(1). CF(0) has four main subunits: a(1), b(1), b'(1) and c(9-12).

It is found in the cellular thylakoid membrane. The catalysed reaction is ATP + H2O + 4 H(+)(in) = ADP + phosphate + 5 H(+)(out). Produces ATP from ADP in the presence of a proton gradient across the membrane. The alpha chain is a regulatory subunit. This is ATP synthase subunit alpha from Prochlorococcus marinus (strain NATL2A).